Reading from the N-terminus, the 99-residue chain is Large ribosomal subunit protein uL23 (99 aa).

It belongs to the universal ribosomal protein uL23 family. Part of the 50S ribosomal subunit. Contacts protein L29, and trigger factor when it is bound to the ribosome.

In terms of biological role, one of the early assembly proteins it binds 23S rRNA. One of the proteins that surrounds the polypeptide exit tunnel on the outside of the ribosome. Forms the main docking site for trigger factor binding to the ribosome. In Rhodopseudomonas palustris (strain BisB18), this protein is Large ribosomal subunit protein uL23.